The following is a 307-amino-acid chain: Putative ankyrin repeat protein L59 (307 aa).

9 ANK repeats span residues 41-67 (LFNK…NLEK), 68-97 (IDNK…DTTN), 98-127 (HNYS…DIRA), 129-157 (DDEA…DVRN), 158-187 (RNDF…DIRT), 188-217 (DDDY…NIHA), 219-247 (GDSA…DIRI), 248-277 (DNDY…DIGA), and 279-307 (NNYA…LKLY).

In Acanthamoeba polyphaga (Amoeba), this protein is Putative ankyrin repeat protein L59.